Consider the following 307-residue polypeptide: tRNA pseudouridine synthase B (307 aa).

Residue aspartate 38 is the Nucleophile of the active site.

The protein belongs to the pseudouridine synthase TruB family. Type 1 subfamily.

The catalysed reaction is uridine(55) in tRNA = pseudouridine(55) in tRNA. In terms of biological role, responsible for synthesis of pseudouridine from uracil-55 in the psi GC loop of transfer RNAs. The protein is tRNA pseudouridine synthase B of Bacillus cereus (strain ATCC 14579 / DSM 31 / CCUG 7414 / JCM 2152 / NBRC 15305 / NCIMB 9373 / NCTC 2599 / NRRL B-3711).